The primary structure comprises 122 residues: Small ribosomal subunit protein uS13 (122 aa).

Residues 96–122 (LPVHGQRTKTNARTRKGPARTVAGKKK) are disordered.

It belongs to the universal ribosomal protein uS13 family. In terms of assembly, part of the 30S ribosomal subunit. Forms a loose heterodimer with protein S19. Forms two bridges to the 50S subunit in the 70S ribosome.

Its function is as follows. Located at the top of the head of the 30S subunit, it contacts several helices of the 16S rRNA. In the 70S ribosome it contacts the 23S rRNA (bridge B1a) and protein L5 of the 50S subunit (bridge B1b), connecting the 2 subunits; these bridges are implicated in subunit movement. Contacts the tRNAs in the A and P-sites. In Geotalea daltonii (strain DSM 22248 / JCM 15807 / FRC-32) (Geobacter daltonii), this protein is Small ribosomal subunit protein uS13.